Here is a 423-residue protein sequence, read N- to C-terminus: COP9 signalosome complex subunit 3 (423 aa).

N-acetylalanine is present on alanine 2. In terms of domain architecture, PCI spans 197–365 (NFERALYFYE…GMVSFHDNPE (169 aa)). Positions 402–423 (QFVQKSMGSQEDDSGNKPSSYS) are disordered. Serine 407, serine 410, and serine 423 each carry phosphoserine.

The protein belongs to the CSN3 family. Component of the CSN complex, composed of COPS1/GPS1, COPS2, COPS3, COPS4, COPS5, COPS6, COPS7 (COPS7A or COPS7B), COPS8 and COPS9. In the complex, it probably interacts directly with COPS1, COPS4, COPS8 and COPS9. Interacts with CK2 and PKD. Interacts with the translation initiation factor EIF3S6 and IKBKG. Interacts with ERCC6.

It localises to the cytoplasm. The protein resides in the nucleus. In terms of biological role, component of the COP9 signalosome complex (CSN), a complex involved in various cellular and developmental processes. The CSN complex is an essential regulator of the ubiquitin (Ubl) conjugation pathway by mediating the deneddylation of the cullin subunits of SCF-type E3 ligase complexes, leading to decrease the Ubl ligase activity of SCF-type complexes such as SCF, CSA or DDB2. The complex is also involved in phosphorylation of p53/TP53, c-jun/JUN, IkappaBalpha/NFKBIA, ITPK1 and IRF8/ICSBP, possibly via its association with CK2 and PKD kinases. CSN-dependent phosphorylation of TP53 and JUN promotes and protects degradation by the Ubl system, respectively. Essential to maintain the survival of epiblast cells and thus the development of the postimplantation embryo. The sequence is that of COP9 signalosome complex subunit 3 (Cops3) from Rattus norvegicus (Rat).